Consider the following 196-residue polypeptide: uncharacterized protein (196 aa).

Positions 21 to 35 (ESRRKDGSVRRERAV) are enriched in basic and acidic residues. Disordered regions lie at residues 21-53 (ESRR…PGRG) and 65-196 (LQLS…KEKE). Residues 66 to 75 (QLSNDASTSK) are compositionally biased toward polar residues. Basic and acidic residues-rich tracts occupy residues 84-94 (ELEKEKLERPL), 100-143 (EKND…KDFK), and 173-196 (KMSK…KEKE).

This is an uncharacterized protein from Schizosaccharomyces pombe (strain 972 / ATCC 24843) (Fission yeast).